The following is a 253-amino-acid chain: Light-harvesting complex stress-related protein 1, chloroplastic (253 aa).

The transit peptide at methionine 1–proline 39 directs the protein to the chloroplast. Tyrosine 45 is a chlorophyll b binding site. Positions 60, 81, and 84 each coordinate chlorophyll a. Residue arginine 86 participates in chlorophyll b binding. A helical membrane pass occupies residues valine 87–phenylalanine 107. Glutamine 124 serves as a coordination point for chlorophyll a. The chain crosses the membrane as a helical span at residues glutamate 131–threonine 151. The chlorophyll b site is built by glutamate 141 and arginine 144. The chlorophyll a site is built by lysine 190, glutamate 191, asparagine 194, arginine 196, and glutamine 208. Residues leucine 197 to phenylalanine 217 form a helical membrane-spanning segment.

It belongs to the light-harvesting chlorophyll a/b-binding (LHC) protein family.

Its subcellular location is the plastid. It localises to the chloroplast thylakoid membrane. Its function is as follows. Required for non-photochemical quenching (NPQ), a mechanism that converts and dissipates the harmful excess absorbed light energy into heat and protect the photosynthetic apparatus from photo-oxidative damage. Is able to sense luminal acidification of the thylakoid membranes, which occurs along with elevated electron flow caused by excess light, and to induce a large, fast, and reversible pH-dependent quenching in LHCII-containing membranes. Mediates excitation energy transfer from light-harvesting complex II (LHCII) to photosystem I (PSI), rather than photosystem II (PSII), at low pH, which mimics the acidified lumen of the thylakoid membranes in high light-exposed chloroplasts. Activates PSI-dependent fluorescence quenching in addition to dissipating excitation energy in LHCII to avoid photooxidative stress under excess light. This Chlamydomonas reinhardtii (Chlamydomonas smithii) protein is Light-harvesting complex stress-related protein 1, chloroplastic.